The primary structure comprises 96 residues: Plasminogen-like protein B (96 aa).

Residues 1–19 (MEHKEVVLLLLLFLKSGQG) form the signal peptide. The PAN domain occupies 20 to 96 (EPLDDYVNTQ…RMRDAVLFEK (77 aa)). 2 disulfides stabilise this stretch: cysteine 49-cysteine 73 and cysteine 53-cysteine 61.

Its subcellular location is the secreted. May bind noncovalently to lysine binding sites present in the kringle structures of plasminogen. This may interfere with the binding of fibrin or alpha-2-antiplasmin to plasminogen and may result in the localization of activity at sites necessary for extracellular matrix destruction. The sequence is that of Plasminogen-like protein B (PLGLB1) from Homo sapiens (Human).